The sequence spans 226 residues: MKLGLVAGMLAVCFSFSSVAMTLKLTPEIDLLVVDGKNMSGSLLKGADSLELNSGMHQILFKVIKTLPTDPLVLYSSPPLIVVFNAHNTRSVAIKLPVINTLRDGHQFSKNPLYQLIGDNGHPLSVRHDVLRQDHLNNSTTLETVMAAYNVGKYNASVPAFAAIPPSPVSAVPGTTIPVAGVNTPHKTASLQGENVTEQMLQYWFLQANPETQKRFLIWAKKQPIH.

The N-terminal stretch at 1–20 is a signal peptide; it reads MKLGLVAGMLAVCFSFSSVA.

It belongs to the UPF0319 family.

In Yersinia pestis bv. Antiqua (strain Angola), this protein is UPF0319 protein YpAngola_A3206.